A 346-amino-acid chain; its full sequence is Fructose-1,6-bisphosphatase class 1 (346 aa).

4 residues coordinate Mg(2+): Glu-96, Asp-119, Leu-121, and Asp-122. Residues 122-125 (DGSS), Asn-214, Tyr-247, and Lys-277 contribute to the substrate site. Glu-283 is a binding site for Mg(2+).

Belongs to the FBPase class 1 family. As to quaternary structure, homotetramer. Mg(2+) is required as a cofactor.

The protein resides in the cytoplasm. The enzyme catalyses beta-D-fructose 1,6-bisphosphate + H2O = beta-D-fructose 6-phosphate + phosphate. The protein operates within carbohydrate biosynthesis; gluconeogenesis. The polypeptide is Fructose-1,6-bisphosphatase class 1 (Cytophaga hutchinsonii (strain ATCC 33406 / DSM 1761 / CIP 103989 / NBRC 15051 / NCIMB 9469 / D465)).